The sequence spans 908 residues: Glutamate receptor ionotropic, kainate 2 (908 aa).

The N-terminal stretch at 1 to 31 (MQRIAGITKMVTHRRWLGLLLLLLCVGYSHG) is a signal peptide. Topologically, residues 32 to 561 (MPHVLRFGGI…VFSFLNPLSP (530 aa)) are extracellular. 7 N-linked (GlcNAc...) asparagine glycosylation sites follow: N67, N73, N275, N378, N412, N423, and N430. C96 and C347 are joined by a disulfide. L-glutamate-binding residues include P516, A518, and R523. N546 carries N-linked (GlcNAc...) asparagine glycosylation. The helical transmembrane segment at 562–582 (DIWMYILLAYLGVSCVLFVIA) threads the bilayer. Over 583 to 638 (RFSPYEWYNPHPCNPDSDVVENNFTLLNSFWFGVGALMQQGSELMPKALSTRIVGG) the chain is Cytoplasmic. The helical transmembrane segment at 639 to 659 (IWWFFTLIIISSYTANLAAFL) threads the bilayer. Over 660–819 (TVERMESPID…KEASALGVQN (160 aa)) the chain is Extracellular. L-glutamate-binding residues include S689, T690, and E738. C750 and C804 are joined by a disulfide. N-linked (GlcNAc...) asparagine glycosylation is present at N751. Residues 820–840 (IGGIFIVLAAGLVLSVFVAVG) traverse the membrane as a helical segment. The Cytoplasmic segment spans residues 841 to 908 (EFLYKSKQNA…RRLPGKETMA (68 aa)).

This sequence belongs to the glutamate-gated ion channel (TC 1.A.10.1) family. GRIK2 subfamily. As to quaternary structure, homotetramer and heterotetramer with GRIK5. Tetramers may be formed by the dimerization of dimers.

The protein resides in the cell membrane. It is found in the postsynaptic cell membrane. The catalysed reaction is Ca(2+)(in) = Ca(2+)(out). The enzyme catalyses Na(+)(in) = Na(+)(out). With respect to regulation, cold receptor activity activated by temperatures between 10-19 degrees Celsius. Functionally, ionotropic glutamate receptor that functions as a cation-permeable ligand-gated ion channel, gated by L-glutamate and the glutamatergic agonist kainic acid. L-glutamate acts as an excitatory neurotransmitter at many synapses in the central nervous system. Binding of the excitatory neurotransmitter L-glutamate induces a conformation change, leading to the opening of the cation channel, and thereby converts the chemical signal to an electrical impulse. The receptor then desensitizes rapidly and enters a transient inactive state, characterized by the presence of bound agonist. Its function is as follows. Independent of its ionotropic glutamate receptor activity, acts as a thermoreceptor conferring sensitivity to cold temperatures. Functions in dorsal root ganglion neurons. The sequence is that of Glutamate receptor ionotropic, kainate 2 from Danio rerio (Zebrafish).